The following is a 238-amino-acid chain: uncharacterized protein (238 aa).

This sequence belongs to the chlamydial CPn_0658/CT_538/TC_0825 family.

This is an uncharacterized protein from Chlamydia muridarum (strain MoPn / Nigg).